Consider the following 153-residue polypeptide: UPF0260 protein YcgN (153 aa).

The protein belongs to the UPF0260 family.

The protein is UPF0260 protein YcgN of Salmonella typhi.